The sequence spans 498 residues: MELSGKSEFPTRTEIPNQASNGDAVPNTDAYMGLCNSLTYRFEGWRHLVENLIAFFKQLESTSKNNAKEYMKLSKVIVHPYKDANVFEEHGIQDIFAALRDQTAAIASDSEQISIQLPGTIINILELLREDLREHCKKIAAEGTKGVKVVEKQRAETQKYLSLLDRALLPWRASSPPTVNIKNDPFIVDRQVLNCLARQVQEENNHSVAVAQLQEFSFRFEQNLIAKIKDTVKQFEGMMNQTHVKAINHLQEVVRVSEAQTLAGEWTGYAKREPEFIHGSVPPRSVDAIKYPGKNDQPTVPIMAGYLIRKTSFLKKKQRGFYAFTHSGYLYEFKSSDSLQDPEPEFALYIPDCLIGRPSEKKPKFKITGKDATKKIFGARNDYAFRASNNTELMRWWEALNTHIANVNYIQPLSNANGPSAVSDSDDDDDDPNDFRPAVERQSSTMNTRMSQPSSAVNTNRSYGSEQIPSYADSQGNSGANNNFIYNASATGHNAWNV.

Residues 1-23 (MELSGKSEFPTRTEIPNQASNGD) form a disordered region. 2 positions are modified to phosphoserine: Ser175 and Ser312. Residues 300 to 405 (VPIMAGYLIR…WWEALNTHIA (106 aa)) form the PH domain. The disordered stretch occupies residues 416–475 (ANGPSAVSDSDDDDDDPNDFRPAVERQSSTMNTRMSQPSSAVNTNRSYGSEQIPSYADSQ). Residues 441 to 475 (RQSSTMNTRMSQPSSAVNTNRSYGSEQIPSYADSQ) are compositionally biased toward polar residues.

It is found in the cell tip. Its function is as follows. Effector of the TORC2- and calcineurin-signaling pathways. Mediates actin polarization via inhibition of calcineurin-dependent transcription. May play a role in the response to the disruption of sphingolipid synthesis, where dephosphorylation of slm1 leads to the activation and phosphorylation of ypk1 through the TORC2 and PKH1 pathways, which in turn phosphorylates orm1 and lag1 to activate sphingolipid synthesis. The polypeptide is Cytoskeletal signaling protein slm1 (slm1) (Schizosaccharomyces pombe (strain 972 / ATCC 24843) (Fission yeast)).